A 460-amino-acid polypeptide reads, in one-letter code: Methylenetetrahydrofolate--tRNA-(uracil-5-)-methyltransferase TrmFO (460 aa).

Residue 12–17 (GGGLAG) participates in FAD binding.

Belongs to the MnmG family. TrmFO subfamily. It depends on FAD as a cofactor.

The protein localises to the cytoplasm. It carries out the reaction uridine(54) in tRNA + (6R)-5,10-methylene-5,6,7,8-tetrahydrofolate + NADH + H(+) = 5-methyluridine(54) in tRNA + (6S)-5,6,7,8-tetrahydrofolate + NAD(+). It catalyses the reaction uridine(54) in tRNA + (6R)-5,10-methylene-5,6,7,8-tetrahydrofolate + NADPH + H(+) = 5-methyluridine(54) in tRNA + (6S)-5,6,7,8-tetrahydrofolate + NADP(+). Catalyzes the folate-dependent formation of 5-methyl-uridine at position 54 (M-5-U54) in all tRNAs. The chain is Methylenetetrahydrofolate--tRNA-(uracil-5-)-methyltransferase TrmFO from Crocosphaera subtropica (strain ATCC 51142 / BH68) (Cyanothece sp. (strain ATCC 51142)).